The sequence spans 443 residues: Endothelin receptor type B (443 aa).

The N-terminal stretch at 1-26 (MQPLRSLCGRALVALIFACGVAGVQS) is a signal peptide. The Extracellular segment spans residues 27-102 (EERGFPPAGA…GPIEIKDTFK (76 aa)). Residues 53–89 (TFWPRGSNASLPRSSSPPQMPKGGRMAGPPARTLTPP) are disordered. A compositionally biased stretch (polar residues) spans 59–69 (SNASLPRSSSP). Asn60 is a glycosylation site (N-linked (GlcNAc...) asparagine). The chain crosses the membrane as a helical span at residues 103 to 127 (YINTVVSCLVFVLGIIGNSTLLRII). Over 128-138 (YKNKCMRNGPN) the chain is Cytoplasmic. A helical membrane pass occupies residues 139–164 (ILIASLALGDLLHIIIDIPINVYKLL). The Extracellular segment spans residues 165–176 (AEDWPFGVEMCK). A disulfide bond links Cys175 and Cys256. The chain crosses the membrane as a helical span at residues 177–198 (LVPFIQKASVGITVLSLCALSI). Over 199–219 (DRYRAVASWSRIKGIGVPKWT) the chain is Cytoplasmic. Residues 220 to 244 (AVEIVLIWVVSVVLAVPEALGFDMI) form a helical membrane-spanning segment. Residues 245–272 (TTDYKGNRLRICLLHPTQKTAFMQFYKT) are Extracellular-facing. The helical transmembrane segment at 273–297 (AKDWWLFSFYFCLPLAITAFFYTLM) threads the bilayer. Residues 298 to 325 (TCEMLRKKSGMQIALNDHLKQRREVAKT) are Cytoplasmic-facing. Ser306 carries the phosphoserine modification. The helical transmembrane segment at 326 to 351 (VFCLVLVFALCWLPLHLSRILKLTLY) threads the bilayer. Topologically, residues 352–363 (DQNDSNRCELLS) are extracellular. N-linked (GlcNAc...) asparagine glycosylation is present at Asn354. A helical membrane pass occupies residues 364 to 390 (FLLVLDYIGINMASLNSCINPIALYLV). Over 391 to 443 (SKRFKNCFKSCLCCWCQSFEEKQSLEEKQSCLKFKANDHGYDNFRSSNKYSSS) the chain is Cytoplasmic. S-palmitoyl cysteine attachment occurs at residues Cys403, Cys404, and Cys406. A Phosphoserine modification is found at Ser420. Tyr440 is modified (phosphotyrosine). Residues Ser441, Ser442, and Ser443 each carry the phosphoserine modification.

This sequence belongs to the G-protein coupled receptor 1 family. Endothelin receptor subfamily. EDNRB sub-subfamily.

It is found in the cell membrane. Functionally, non-specific receptor for endothelin 1, 2, and 3. Mediates its action by association with G proteins that activate a phosphatidylinositol-calcium second messenger system. This Sus scrofa (Pig) protein is Endothelin receptor type B (EDNRB).